The primary structure comprises 319 residues: Zinc finger protein-like 1 homolog (319 aa).

The segment at 1–43 adopts a B box-type; degenerate zinc-finger fold; sequence MGLCKCPKRKVTNLFCYEHRVNVCEFCLVDNHPNCVVQSYLNW. The RING-type; atypical zinc finger occupies 53–101; that stretch reads CSLCHTTLTQGETIRLNCLHLLHWRCFDDWAASFPPTTAPAGYRCPCCS. The interval 212-232 is disordered; the sequence is ESSSDTRPLLRQDRDADNEEN. Over residues 219–232 the composition is skewed to basic and acidic residues; the sequence is PLLRQDRDADNEEN. A helical membrane pass occupies residues 264-284; sequence KMAIFVMFLALLALITIITVL.

It belongs to the ZFPL1 family.

It localises to the membrane. In Caenorhabditis briggsae, this protein is Zinc finger protein-like 1 homolog.